An 88-amino-acid polypeptide reads, in one-letter code: Small ribosomal subunit protein bS20 (88 aa).

The segment at 1–21 is disordered; it reads MANSAQAKKRARQNVKARKHN. Basic residues predominate over residues 7-21; it reads AKKRARQNVKARKHN.

Belongs to the bacterial ribosomal protein bS20 family.

Its function is as follows. Binds directly to 16S ribosomal RNA. This chain is Small ribosomal subunit protein bS20, found in Acinetobacter baumannii (strain AB307-0294).